Reading from the N-terminus, the 85-residue chain is Phosphocarrier protein HPr (85 aa).

Positions 1–85 (MFQQEVTITA…HLVKLMAELE (85 aa)) constitute an HPr domain. H15 serves as the catalytic Pros-phosphohistidine intermediate.

The protein belongs to the HPr family.

It is found in the cytoplasm. Functionally, general (non sugar-specific) component of the phosphoenolpyruvate-dependent sugar phosphotransferase system (sugar PTS). This major carbohydrate active-transport system catalyzes the phosphorylation of incoming sugar substrates concomitantly with their translocation across the cell membrane. The phosphoryl group from phosphoenolpyruvate (PEP) is transferred to the phosphoryl carrier protein HPr by enzyme I. Phospho-HPr then transfers it to the PTS EIIA domain. This Escherichia coli O157:H7 protein is Phosphocarrier protein HPr (ptsH).